The sequence spans 453 residues: tRNA modification GTPase MnmE (453 aa).

The (6S)-5-formyl-5,6,7,8-tetrahydrofolate site is built by Arg-22, Glu-79, and Lys-119. In terms of domain architecture, TrmE-type G spans Gly-215–Gly-376. Asn-225 is a K(+) binding site. Residues Asn-225–Ser-230, Thr-244–Thr-250, Asp-269–Gly-272, and Asn-334–Asp-337 contribute to the GTP site. Ser-229 lines the Mg(2+) pocket. K(+) is bound by residues Thr-244, Ile-246, and Thr-249. Thr-250 serves as a coordination point for Mg(2+). Residue Lys-453 participates in (6S)-5-formyl-5,6,7,8-tetrahydrofolate binding.

This sequence belongs to the TRAFAC class TrmE-Era-EngA-EngB-Septin-like GTPase superfamily. TrmE GTPase family. As to quaternary structure, homodimer. Heterotetramer of two MnmE and two MnmG subunits. K(+) is required as a cofactor.

The protein localises to the cytoplasm. Functionally, exhibits a very high intrinsic GTPase hydrolysis rate. Involved in the addition of a carboxymethylaminomethyl (cmnm) group at the wobble position (U34) of certain tRNAs, forming tRNA-cmnm(5)s(2)U34. The polypeptide is tRNA modification GTPase MnmE (Shewanella pealeana (strain ATCC 700345 / ANG-SQ1)).